A 1607-amino-acid chain; its full sequence is Abnormal cell migration protein 38 (1607 aa).

12 disordered regions span residues 14-52, 67-93, 167-222, 326-425, 459-478, 549-594, 845-931, 1017-1061, 1141-1241, 1319-1378, 1392-1445, and 1517-1607; these read EFNK…SQDF, RLSP…QYHV, STSY…AAQA, GSSA…PPSQ, SPNT…GMDQ, MVHR…QHSY, YDEN…PETE, SVQV…DYDM, EPSP…VTPK, ETPN…KGQL, FANV…PQAV, and KVKT…STDP. Composition is skewed to polar residues over residues 81 to 93 and 179 to 191; these read PGPS…QYHV and PSGN…NHQQ. Residues 195–205 show a composition bias toward low complexity; sequence VPQVQQQPAKP. Positions 206-218 are enriched in basic residues; the sequence is KTTKKRPPPKKKT. A compositionally biased stretch (low complexity) spans 327–341; that stretch reads SSASSSAQPSQPAKK. 2 stretches are compositionally biased toward polar residues: residues 349 to 371 and 379 to 425; these read VPNT…QITP and PTTT…PPSQ. The span at 585–594 shows a compositional bias: low complexity; it reads NSHSQSQHSY. The span at 858–871 shows a compositional bias: acidic residues; the sequence is EEPESESESEPEAE. Basic and acidic residues-rich tracts occupy residues 872–886 and 907–917; these read PEPK…EPAR and YRNESESTFDW. Low complexity-rich tracts occupy residues 1333 to 1354, 1395 to 1419, and 1584 to 1601; these read PNIP…SVSV, VPSS…VSAK, and LLGT…SSGL.

As to expression, expressed in gonad distal tip cells and gonad sheath cells.

Its subcellular location is the nucleus. The protein localises to the cytoplasm. Functionally, during gonad development, involved in distal tip cell (DTC) migration from the dorsal side of the hermaphrodite body to the midbody which allows for the formation of gonad arms. Role in gonad DTC migration may be in association with integrin related proteins ina-1 and mig-15. This is Abnormal cell migration protein 38 from Caenorhabditis elegans.